We begin with the raw amino-acid sequence, 313 residues long: MEQVNKTVVREFVVLGFSSLARLQQLLFVIFLLLYLFTLGTNAIIISTIVLDRALHTPMYFFLAILSCSEICYTFVIVPKMLVDLLSQKKTISFLGCAIQMFSFLFFGSSHSFLLAAMGYDRYMAICNPLRYSVLMGHGVCMGLMAAACACGFTVSLVTTSLVFHLPFHSSNQLHHFFCDISPVLKLASQHSGFSQLVIFMLGVFALVIPLLLILVSYIRIISAILKIPSSVGRYKTFSTCASHLIVVTVHYSCASFIYLRPKTNYTSSQDTLISVSYTILTPLFNPMIYSLRNKEFKSALRRTIGQTFYPLS.

Topologically, residues 1–25 are extracellular; the sequence is MEQVNKTVVREFVVLGFSSLARLQQ. An N-linked (GlcNAc...) asparagine glycan is attached at Asn5. Residues 26 to 46 form a helical membrane-spanning segment; sequence LLFVIFLLLYLFTLGTNAIII. Residues 47–54 are Cytoplasmic-facing; that stretch reads STIVLDRA. Residues 55–75 traverse the membrane as a helical segment; sequence LHTPMYFFLAILSCSEICYTF. Residues 76–99 lie on the Extracellular side of the membrane; the sequence is VIVPKMLVDLLSQKKTISFLGCAI. Residues 100–120 traverse the membrane as a helical segment; sequence QMFSFLFFGSSHSFLLAAMGY. Over 121–139 the chain is Cytoplasmic; it reads DRYMAICNPLRYSVLMGHG. The chain crosses the membrane as a helical span at residues 140-160; that stretch reads VCMGLMAAACACGFTVSLVTT. Residues 161–197 are Extracellular-facing; it reads SLVFHLPFHSSNQLHHFFCDISPVLKLASQHSGFSQL. A helical membrane pass occupies residues 198 to 217; sequence VIFMLGVFALVIPLLLILVS. Topologically, residues 218-237 are cytoplasmic; the sequence is YIRIISAILKIPSSVGRYKT. The chain crosses the membrane as a helical span at residues 238–258; sequence FSTCASHLIVVTVHYSCASFI. Over 259–271 the chain is Extracellular; sequence YLRPKTNYTSSQD. The N-linked (GlcNAc...) asparagine glycan is linked to Asn265. A helical transmembrane segment spans residues 272–292; it reads TLISVSYTILTPLFNPMIYSL. Residues 293 to 313 lie on the Cytoplasmic side of the membrane; sequence RNKEFKSALRRTIGQTFYPLS.

This sequence belongs to the G-protein coupled receptor 1 family.

The protein localises to the cell membrane. Odorant receptor. The chain is Olfactory receptor 10K1 (OR10K1) from Homo sapiens (Human).